A 408-amino-acid polypeptide reads, in one-letter code: Multidrug resistance protein MdtG (408 aa).

The next 11 membrane-spanning stretches (helical) occupy residues 16-36 (LIVAWLGCFLTGAAFSLVMPF), 58-78 (IVFSITFLFSAIASPFWGGLA), 92-112 (LGMGIVMVLMGLAQNIWQFLI), 115-135 (ALLGLLGGFVPNANALIATQV), 146-166 (TLSTGGVSGALLGPMAGGLLA), 173-193 (PVFFITASVLILCFFVTLFCI), 224-244 (LFVTTLIIQVATGSIAPILTL), 256-276 (VAFISGMIASVPGVAALLSAP), 290-310 (ILITALIFSVLLLIPMSYVQT), 319-339 (FLLGAADGALLPAVQTLLVYN), and 378-398 (AVFLVTAGVVLFNAVYSWNSL).

The protein belongs to the major facilitator superfamily. DHA1 family. MdtG (TC 2.A.1.2.20) subfamily.

The protein resides in the cell inner membrane. Functionally, confers resistance to fosfomycin and deoxycholate. The chain is Multidrug resistance protein MdtG from Escherichia coli O127:H6 (strain E2348/69 / EPEC).